A 706-amino-acid chain; its full sequence is Axin-related protein (706 aa).

One can recognise an RGS domain in the interval 72–191; the sequence is SLNLLLDDQD…LQSDICKEYA (120 aa). Disordered stretches follow at residues 278-298, 400-482, and 585-605; these read MTDG…REIH, TPAN…GTSA, and STTL…GFST. The segment covering 402–412 has biased composition (polar residues); that stretch reads ANLSPRSQSPF. Low complexity predominate over residues 453 to 462; the sequence is RSSVSSQLPR. Residues 624-706 form the DIX domain; it reads GQGLAIVYYF…KIICKVERAC (83 aa).

Interacts with dvl2/dsh via DIX domains in both proteins. Forms a complex with ctnnb1/beta-catenin and gsk3b. Also forms heterodimers with mouse Axin1.

The protein localises to the cytoplasm. It localises to the cytoplasmic vesicle. Its function is as follows. Regulates the wnt signaling pathway by interacting with dvl2/dsh, which displaces gsk3b from the axnr-gsk3b complex and thus prevents degradation of ctnnb1/beta-catenin. This chain is Axin-related protein, found in Xenopus laevis (African clawed frog).